Reading from the N-terminus, the 145-residue chain is 3-dehydroquinate dehydratase (145 aa).

Residue Tyr24 is the Proton acceptor of the active site. Substrate is bound by residues Asn75, His81, and Asp88. The Proton donor role is filled by His101. Substrate contacts are provided by residues 102–103 and Arg112; that span reads IS.

It belongs to the type-II 3-dehydroquinase family. In terms of assembly, homododecamer.

The catalysed reaction is 3-dehydroquinate = 3-dehydroshikimate + H2O. Its pathway is metabolic intermediate biosynthesis; chorismate biosynthesis; chorismate from D-erythrose 4-phosphate and phosphoenolpyruvate: step 3/7. Catalyzes a trans-dehydration via an enolate intermediate. The polypeptide is 3-dehydroquinate dehydratase (aroQ) (Corynebacterium glutamicum (strain ATCC 13032 / DSM 20300 / JCM 1318 / BCRC 11384 / CCUG 27702 / LMG 3730 / NBRC 12168 / NCIMB 10025 / NRRL B-2784 / 534)).